The following is a 202-amino-acid chain: Glycerol-3-phosphate acyltransferase (202 aa).

The next 4 helical transmembrane spans lie at Ala2 to Val22, Leu80 to Val100, Ala119 to Phe139, and Val158 to Ile178.

Belongs to the PlsY family. Probably interacts with PlsX.

Its subcellular location is the cell inner membrane. It catalyses the reaction an acyl phosphate + sn-glycerol 3-phosphate = a 1-acyl-sn-glycero-3-phosphate + phosphate. The protein operates within lipid metabolism; phospholipid metabolism. Functionally, catalyzes the transfer of an acyl group from acyl-phosphate (acyl-PO(4)) to glycerol-3-phosphate (G3P) to form lysophosphatidic acid (LPA). This enzyme utilizes acyl-phosphate as fatty acyl donor, but not acyl-CoA or acyl-ACP. The chain is Glycerol-3-phosphate acyltransferase from Cupriavidus necator (strain ATCC 17699 / DSM 428 / KCTC 22496 / NCIMB 10442 / H16 / Stanier 337) (Ralstonia eutropha).